Here is a 266-residue protein sequence, read N- to C-terminus: Uxu operon regulator (266 aa).

In terms of domain architecture, HTH gntR-type spans 23-91; the sequence is NRTYTRIGQL…KGSGVYVVRT (69 aa). The H-T-H motif DNA-binding region spans 51–70; sequence EREISEKFGVSRTIVREAMV.

Repressor for the uxuRBA operon. The polypeptide is Uxu operon regulator (uxuR) (Haemophilus influenzae (strain ATCC 51907 / DSM 11121 / KW20 / Rd)).